The sequence spans 315 residues: Aspartate carbamoyltransferase catalytic subunit (315 aa).

Carbamoyl phosphate-binding residues include R65 and T66. K93 contacts L-aspartate. Residues R115, H145, and Q148 each contribute to the carbamoyl phosphate site. L-aspartate-binding residues include R179 and R234. Carbamoyl phosphate is bound by residues G275 and P276.

This sequence belongs to the aspartate/ornithine carbamoyltransferase superfamily. ATCase family. In terms of assembly, heterododecamer (2C3:3R2) of six catalytic PyrB chains organized as two trimers (C3), and six regulatory PyrI chains organized as three dimers (R2).

The catalysed reaction is carbamoyl phosphate + L-aspartate = N-carbamoyl-L-aspartate + phosphate + H(+). It participates in pyrimidine metabolism; UMP biosynthesis via de novo pathway; (S)-dihydroorotate from bicarbonate: step 2/3. In terms of biological role, catalyzes the condensation of carbamoyl phosphate and aspartate to form carbamoyl aspartate and inorganic phosphate, the committed step in the de novo pyrimidine nucleotide biosynthesis pathway. The sequence is that of Aspartate carbamoyltransferase catalytic subunit from Xanthomonas axonopodis pv. citri (strain 306).